The primary structure comprises 109 residues: uncharacterized protein (109 aa).

This is an uncharacterized protein from Treponema pallidum (strain Nichols).